The sequence spans 217 residues: Imidazole glycerol phosphate synthase subunit HisH (217 aa).

The 215-residue stretch at 3-217 (SVAVIDYGMG…FLRWEPWSSR (215 aa)) folds into the Glutamine amidotransferase type-1 domain. Cys82 acts as the Nucleophile in catalysis. Catalysis depends on residues His193 and Glu195.

As to quaternary structure, heterodimer of HisH and HisF.

It localises to the cytoplasm. The catalysed reaction is 5-[(5-phospho-1-deoxy-D-ribulos-1-ylimino)methylamino]-1-(5-phospho-beta-D-ribosyl)imidazole-4-carboxamide + L-glutamine = D-erythro-1-(imidazol-4-yl)glycerol 3-phosphate + 5-amino-1-(5-phospho-beta-D-ribosyl)imidazole-4-carboxamide + L-glutamate + H(+). It catalyses the reaction L-glutamine + H2O = L-glutamate + NH4(+). Its pathway is amino-acid biosynthesis; L-histidine biosynthesis; L-histidine from 5-phospho-alpha-D-ribose 1-diphosphate: step 5/9. In terms of biological role, IGPS catalyzes the conversion of PRFAR and glutamine to IGP, AICAR and glutamate. The HisH subunit catalyzes the hydrolysis of glutamine to glutamate and ammonia as part of the synthesis of IGP and AICAR. The resulting ammonia molecule is channeled to the active site of HisF. The chain is Imidazole glycerol phosphate synthase subunit HisH from Methylococcus capsulatus (strain ATCC 33009 / NCIMB 11132 / Bath).